Consider the following 185-residue polypeptide: NEDD8-conjugating enzyme UBE2F (185 aa).

Met-1 is modified (N-acetylmethionine). The segment at 1 to 29 (MLTLASKLKRDDGLKGSRTAATASDSTRR) is interaction with UBA3. Residues 32–185 (VRDKLLVKEV…VDDYIKRYAR (154 aa)) form the UBC core domain. The active-site Glycyl thioester intermediate is the Cys-116.

This sequence belongs to the ubiquitin-conjugating enzyme family. UBE2F subfamily. Interacts with UBA3 and RBX2. Interacts (N-terminally acetylated form) with (via DCUN1 domain) DCUN1D1, DCUN1D2, DCUN1D3, DCUN1D4 and DCUN1D5. The acetylation of Met-1 increases affinity for DCUN1D3 by about 2 orders of magnitude and is crucial for NEDD8 transfer to cullins. In terms of tissue distribution, widely expressed (at protein level).

The enzyme catalyses [E1 NEDD8-activating enzyme]-S-[NEDD8 protein]-yl-L-cysteine + [E2 NEDD8-conjugating enzyme]-L-cysteine = [E1 NEDD8-activating enzyme]-L-cysteine + [E2 NEDD8-conjugating enzyme]-S-[NEDD8-protein]-yl-L-cysteine.. It participates in protein modification; protein neddylation. Its function is as follows. Accepts the ubiquitin-like protein NEDD8 from the UBA3-NAE1 E1 complex and catalyzes its covalent attachment to other proteins. Together with the E3 ubiquitin ligase RNF7/RBX2, specifically neddylates cullin-5 (CUL5). Does not neddylate CUL1, CUL2, CUL3, CUL4A or CUL4B. Mediates neddylation of the CUL9-RBX1 complex. (Microbial infection) Following infection by HIV-1 virus, participates to HIV-1 Vif protein-mediated ubiquitination and degradation of APOBEC3G by mediating neddylation of cullin-5 (CUL5). The protein is NEDD8-conjugating enzyme UBE2F (UBE2F) of Homo sapiens (Human).